A 200-amino-acid polypeptide reads, in one-letter code: Cytochrome c biogenesis ATP-binding export protein CcmA (200 aa).

The ABC transporter domain occupies 2–200 (LDVIELDFDY…NKADYEEYHL (199 aa)). 34–41 (GSNGAGKT) provides a ligand contact to ATP.

The protein belongs to the ABC transporter superfamily. CcmA exporter (TC 3.A.1.107) family. The complex is composed of two ATP-binding proteins (CcmA) and two transmembrane proteins (CcmB).

It is found in the cell inner membrane. It carries out the reaction heme b(in) + ATP + H2O = heme b(out) + ADP + phosphate + H(+). In terms of biological role, part of the ABC transporter complex CcmAB involved in the biogenesis of c-type cytochromes; once thought to export heme, this seems not to be the case, but its exact role is uncertain. Responsible for energy coupling to the transport system. This chain is Cytochrome c biogenesis ATP-binding export protein CcmA, found in Legionella pneumophila (strain Paris).